The chain runs to 281 residues: Histidine biosynthesis bifunctional protein hisIE, chloroplastic (281 aa).

A chloroplast-targeting transit peptide spans 1–50 (MAVSYNALAQSLARSSCFIPKPYSFRDTKLRSRSNVVFACNDNKNIALQA). The phosphoribosyl-AMP cyclohydrolase stretch occupies residues 51–178 (KVDNLLDRIK…NKLALTTLYS (128 aa)). The interval 179–281 (LESIISKRKE…GIEEKQNRTK (103 aa)) is phosphoribosyl-ATP pyrophosphohydrolase.

It in the N-terminal section; belongs to the PRA-CH family. This sequence in the C-terminal section; belongs to the PRA-PH family. Ubiquitously expressed throughout development.

It localises to the plastid. It is found in the chloroplast. The enzyme catalyses 1-(5-phospho-beta-D-ribosyl)-ATP + H2O = 1-(5-phospho-beta-D-ribosyl)-5'-AMP + diphosphate + H(+). It carries out the reaction 1-(5-phospho-beta-D-ribosyl)-5'-AMP + H2O = 1-(5-phospho-beta-D-ribosyl)-5-[(5-phospho-beta-D-ribosylamino)methylideneamino]imidazole-4-carboxamide. It participates in amino-acid biosynthesis; L-histidine biosynthesis; L-histidine from 5-phospho-alpha-D-ribose 1-diphosphate: step 2/9. The protein operates within amino-acid biosynthesis; L-histidine biosynthesis; L-histidine from 5-phospho-alpha-D-ribose 1-diphosphate: step 3/9. This is Histidine biosynthesis bifunctional protein hisIE, chloroplastic (HISN2) from Arabidopsis thaliana (Mouse-ear cress).